Here is a 528-residue protein sequence, read N- to C-terminus: Na(+)/H(+) antiporter NhaB (528 aa).

Transmembrane regions (helical) follow at residues 23 to 45 (FAIL…IAGW), 66 to 86 (PGGL…TQVL), 95 to 115 (VLLL…LLLY), 130 to 164 (VSML…FYSI), 203 to 223 (LLMH…VGEP), 241 to 261 (IRMS…CFIV), 310 to 330 (LIVG…SVII), 349 to 369 (EEAL…GVII), 390 to 410 (LVIF…VFVG), 448 to 468 (ATPN…APLI), and 475 to 495 (MVMM…LAIE).

This sequence belongs to the NhaB Na(+)/H(+) (TC 2.A.34) antiporter family.

Its subcellular location is the cell inner membrane. The enzyme catalyses 2 Na(+)(in) + 3 H(+)(out) = 2 Na(+)(out) + 3 H(+)(in). Its function is as follows. Na(+)/H(+) antiporter that extrudes sodium in exchange for external protons. The polypeptide is Na(+)/H(+) antiporter NhaB (Shewanella amazonensis (strain ATCC BAA-1098 / SB2B)).